The primary structure comprises 154 residues: Prefoldin subunit 5 (154 aa).

Ala-2 is modified (N-acetylalanine). At Lys-42 the chain carries N6-acetyllysine. Phosphoserine is present on Ser-56.

Belongs to the prefoldin subunit alpha family. In terms of assembly, heterohexamer of two PFD-alpha type and four PFD-beta type subunits.

It localises to the nucleus. Functionally, binds specifically to cytosolic chaperonin (c-CPN) and transfers target proteins to it. Binds to nascent polypeptide chain and promotes folding in an environment in which there are many competing pathways for nonnative proteins. Represses the transcriptional activity of MYC. This chain is Prefoldin subunit 5 (PFDN5), found in Pongo abelii (Sumatran orangutan).